The following is an 879-amino-acid chain: Alanine--tRNA ligase (879 aa).

Residues histidine 566, histidine 570, cysteine 668, and histidine 672 each coordinate Zn(2+).

This sequence belongs to the class-II aminoacyl-tRNA synthetase family. The cofactor is Zn(2+).

The protein resides in the cytoplasm. It carries out the reaction tRNA(Ala) + L-alanine + ATP = L-alanyl-tRNA(Ala) + AMP + diphosphate. Its function is as follows. Catalyzes the attachment of alanine to tRNA(Ala) in a two-step reaction: alanine is first activated by ATP to form Ala-AMP and then transferred to the acceptor end of tRNA(Ala). Also edits incorrectly charged Ser-tRNA(Ala) and Gly-tRNA(Ala) via its editing domain. This is Alanine--tRNA ligase from Listeria monocytogenes serotype 4b (strain F2365).